The primary structure comprises 329 residues: 3'-5' exonuclease (329 aa).

The disordered stretch occupies residues 26–88 (EEKPKPKKVV…MADVGTPSPE (63 aa)). Basic and acidic residues predominate over residues 46-65 (KNLDTPEIVNKENAEVENPP). Residues Ser78 and Ser86 each carry the phosphoserine modification. Residues 130–288 (TEIVPMAFDM…IGQVIYREIE (159 aa)) enclose the 3'-5' exonuclease domain. Mg(2+) contacts are provided by Asp138, Glu140, and Asp276.

The protein belongs to the WRNexo family.

The protein resides in the nucleus. Has exonuclease activity on both single-stranded and duplex templates bearing overhangs, but not blunt ended duplex DNA, and cleaves in a 3'-5' direction. Essential for the formation of DNA replication focal centers. Has an important role in maintaining genome stability. This Drosophila mojavensis (Fruit fly) protein is 3'-5' exonuclease.